The primary structure comprises 763 residues: MGEDTKATIEPTANKTTSLEKPSEAMAGKENAGGKETQELAKDEDMAEPDNMEIDAQIKKDDEKAETEDKESEVKKNEDNAETQKMEEKVEVTKDEGQAEATNMDEDADGKKEQTDDGVSVEDTVMKENVESKDNNYAKDDEKETKETDITEADHKKAGKEDIQHEADKANGTKDGNTGDIKEEGTLVDEDKGTDMDEKVENGDENKQVENVEGKEKEDKEENKTKEVEAAKAEVDESKVEDEKEGSEDENDNEKVESKDAKEDEKEETNDDKEDEKEESKGSKKRGKGTSSGGKVREKNKTEEVKKDAEPRTPFSDRPVRERKSVERLVALIDKDSSKEFRVEKGRGAYLKDIPNVANKVMRKRSDETLKLLHPILFGGRRGKAAQIKTNILGFSGFVWHGDEKKAKEKVKEKLEKCTKEKLWEFCDVLDIHITKATTKKEDIITKLFEFLEKPHVTGDVTGDTTVSEKEKSSKGAKRKRTPKKTSPTAGSSSSKRSAKSQKKSEEATKVVKKSLAHSDDESEEEKEEEEKQEEEKAEEKEEKKEEENENGIPDKSEDEAPQPSESEEKDESEEHSEEETTKKKRGSRLSAGKKESAGRARNKKAVVAAKSSPPEKITQKRSSAKRKKTDDDSDTSPKASSKRKKSENPIKASPAPSKSASKEKPVKRAGKGKDKPSDKVLKNAIVEILKRVDFSTATFTDILKELAKEFTEDLTPRKSSIKMIIQEELTKLADEEEEEEKKEEDSEKEEAGGSGGGEEVKA.

Disordered stretches follow at residues 1 to 324 and 458 to 681; these read MGED…RERK and TGDV…SDKV. The span at 11 to 20 shows a compositional bias: polar residues; sequence PTANKTTSLE. Composition is skewed to basic and acidic residues over residues 32 to 44, 72 to 97, 124 to 172, and 180 to 242; these read AGGK…AKDE, SEVK…KDEG, TVMK…KANG, and DIKE…KVED. The stretch at 60-96 forms a coiled coil; the sequence is KDDEKAETEDKESEVKKNEDNAETQKMEEKVEVTKDE. Residues 214 to 286 are a coiled coil; it reads GKEKEDKEEN…KEESKGSKKR (73 aa). Acidic residues predominate over residues 243–252; that stretch reads EKEGSEDEND. Basic and acidic residues predominate over residues 253–264; it reads NEKVESKDAKED. The span at 265–277 shows a compositional bias: acidic residues; it reads EKEETNDDKEDEK. The Nuclear localization signal 1 signature appears at 284 to 291; the sequence is KKRGKGTS. Over residues 295–311 the composition is skewed to basic and acidic residues; the sequence is KVREKNKTEEVKKDAEP. Over residues 475–484 the composition is skewed to basic residues; the sequence is KGAKRKRTPK. Residues 483–490 carry the Nuclear localization signal 2 motif; sequence PKKTSPTA. Residues 485–496 show a composition bias toward low complexity; the sequence is KTSPTAGSSSSK. The stretch at 513 to 551 forms a coiled coil; the sequence is KKSLAHSDDESEEEKEEEEKQEEEKAEEKEEKKEEENEN. A compositionally biased stretch (acidic residues) spans 521-533; the sequence is DESEEEKEEEEKQ. Basic and acidic residues predominate over residues 534-547; sequence EEEKAEEKEEKKEE. A compositionally biased stretch (acidic residues) spans 557 to 578; the sequence is SEDEAPQPSESEEKDESEEHSE. Low complexity-rich tracts occupy residues 606-615 and 650-660; these read AVVAAKSSPP and PIKASPAPSKS. Positions 661 to 681 are enriched in basic and acidic residues; that stretch reads ASKEKPVKRAGKGKDKPSDKV. Residues 676–731 form the DEK-C domain; that stretch reads KPSDKVLKNAIVEILKRVDFSTATFTDILKELAKEFTEDLTPRKSSIKMIIQEELT. 2 consecutive DNA-binding regions follow at residues 694-708 and 723-727; these read DFST…KELA and KMIIQ. Positions 723–753 form a coiled coil; the sequence is KMIIQEELTKLADEEEEEEKKEEDSEKEEAG. Residues 730-763 form a disordered region; sequence LTKLADEEEEEEKKEEDSEKEEAGGSGGGEEVKA. Positions 753 to 763 are enriched in gly residues; that stretch reads GGSGGGEEVKA.

In terms of assembly, found in a mRNA splicing-dependent exon junction complex (EJC). Binds specifically histones H3 and H4. Interacts with TOP1A, SCC3, At1g61730, At1g20940, At1g13930, DEK4, HDT1, NIT1, SHL, CYP19-1, GEBPL, HSP70-3, PDP2, PDP3, KIN2, RPL11A and PDS5A. As to expression, highly expressed in young seedlings.

It is found in the nucleus. It localises to the nucleolus. Functionally, chromatin-associated protein which contributes to the modulation of chromatin structure (such as super-helical structure of DNA) and function. Binds to chromatin of protein-coding genes throughout the genome to regulate nucleosome occupancy and chromatin accessibility, and to modulate the expression of target genes. Negative regulator of stress tolerance (e.g. high salt). The polypeptide is DEK domain-containing chromatin-associated protein 3 (Arabidopsis thaliana (Mouse-ear cress)).